Consider the following 152-residue polypeptide: Arginine repressor (152 aa).

The protein belongs to the ArgR family.

The protein localises to the cytoplasm. It functions in the pathway amino-acid biosynthesis; L-arginine biosynthesis [regulation]. Functionally, regulates arginine biosynthesis genes. In Lactiplantibacillus plantarum (strain ATCC BAA-793 / NCIMB 8826 / WCFS1) (Lactobacillus plantarum), this protein is Arginine repressor.